Here is a 197-residue protein sequence, read N- to C-terminus: Small ribosomal subunit protein uS4 (197 aa).

Residues 87–147 (SRIDNVIFRL…ESKKNTQRMK (61 aa)) enclose the S4 RNA-binding domain.

The protein belongs to the universal ribosomal protein uS4 family. In terms of assembly, part of the 30S ribosomal subunit. Contacts protein S5. The interaction surface between S4 and S5 is involved in control of translational fidelity.

In terms of biological role, one of the primary rRNA binding proteins, it binds directly to 16S rRNA where it nucleates assembly of the body of the 30S subunit. Functionally, with S5 and S12 plays an important role in translational accuracy. The protein is Small ribosomal subunit protein uS4 of Agathobacter rectalis (strain ATCC 33656 / DSM 3377 / JCM 17463 / KCTC 5835 / VPI 0990) (Eubacterium rectale).